The primary structure comprises 321 residues: Glycerol-3-phosphate phosphatase (321 aa).

The active-site Nucleophile is Asp-34. The Mg(2+) site is built by Asp-34, Asp-36, and Asp-260. The active-site Proton donor is the Asp-36.

Belongs to the HAD-like hydrolase superfamily. CbbY/CbbZ/Gph/YieH family. In terms of assembly, homodimer. It depends on Mg(2+) as a cofactor. Ubiquitously expressed with higher expression in testis, heart, skeletal muscle and islet tissue (at protein level).

It carries out the reaction O-phospho-L-tyrosyl-[protein] + H2O = L-tyrosyl-[protein] + phosphate. It catalyses the reaction sn-glycerol 1-phosphate + H2O = glycerol + phosphate. The catalysed reaction is sn-glycerol 3-phosphate + H2O = glycerol + phosphate. Its activity is regulated as follows. Inhibited by orthovanadate, beryllium trifluoride, Ca(2+) and EDTA. Functionally, glycerol-3-phosphate phosphatase hydrolyzing glycerol-3-phosphate into glycerol. Thereby, regulates the cellular levels of glycerol-3-phosphate a metabolic intermediate of glucose, lipid and energy metabolism. Was also shown to have a 2-phosphoglycolate phosphatase activity and a tyrosine-protein phosphatase activity. However, their physiological relevance is unclear. In vitro, also has a phosphatase activity toward ADP, ATP, GDP and GTP. The chain is Glycerol-3-phosphate phosphatase from Mus musculus (Mouse).